The primary structure comprises 100 residues: Small ribosomal subunit protein eS24 (100 aa).

The protein belongs to the eukaryotic ribosomal protein eS24 family.

In Methanothermobacter thermautotrophicus (strain ATCC 29096 / DSM 1053 / JCM 10044 / NBRC 100330 / Delta H) (Methanobacterium thermoautotrophicum), this protein is Small ribosomal subunit protein eS24.